Here is a 305-residue protein sequence, read N- to C-terminus: Protein FdhE homolog (305 aa).

This sequence belongs to the FdhE family.

Its subcellular location is the cytoplasm. In terms of biological role, necessary for formate dehydrogenase activity. The polypeptide is Protein FdhE homolog (Haemophilus ducreyi (strain 35000HP / ATCC 700724)).